A 200-amino-acid chain; its full sequence is uncharacterized protein (200 aa).

An N-terminal signal peptide occupies residues 1–19; it reads MNAMFHSLFALSFVSLVAS. The chain crosses the membrane as a helical span at residues 148–168; it reads FMVIVSLAAFCISVLAGLALQ.

It localises to the membrane. This is an uncharacterized protein from Caenorhabditis elegans.